We begin with the raw amino-acid sequence, 111 residues long: MIGVILVLASLLSVGGQLCQKQATRPLTVGGRRRHLMLWLGLALICMGAAMVLWLLVLQTLPVGIAYPMLSLNFVWVTLAAWKIWHEQVPPRHWFGVALIISGIIILGSAA.

3 consecutive transmembrane segments (helical) span residues 38 to 58 (LWLG…LLVL), 61 to 81 (LPVG…TLAA), and 91 to 111 (PRHW…GSAA). The EamA domain occupies 40-109 (LGLALICMGA…IISGIIILGS (70 aa)).

It belongs to the ArnE family. As to quaternary structure, heterodimer of ArnE and ArnF.

The protein resides in the cell inner membrane. It participates in bacterial outer membrane biogenesis; lipopolysaccharide biosynthesis. Functionally, translocates 4-amino-4-deoxy-L-arabinose-phosphoundecaprenol (alpha-L-Ara4N-phosphoundecaprenol) from the cytoplasmic to the periplasmic side of the inner membrane. The sequence is that of Probable 4-amino-4-deoxy-L-arabinose-phosphoundecaprenol flippase subunit ArnE from Salmonella enteritidis PT4 (strain P125109).